The sequence spans 815 residues: MTIKNNILVIGSGSREHAITWKLLESNQVDKVILVPGNASSSTMERVITVECSKIDAESISNICKEHNVEYVFVGPEVPLVDGIVDGLKRKGISCFGPTKKAAQLEGSKVFCKDFMARNNIPSARYQTFTDYNKAKQYIESLNYKIVLKASGCAAGKGVLIPNNKEEELEGLKRIMVDKEFGSAGDEIVIEEFLDGEECSLMCFSDGYSLVVMPPAQDHKRIFDGDKGANTGGMGAYAPAPFIVDCNNNATTDKSKSKSSFGTIIDRCVETILKPTINGMRKEGKPFVGVLFAGLMVSSSSSTTNDKVINVLEFNCRMGDPETQVVLPLLETDLFEIVLACIEGRLDGLDVKWSNKFAVTVVAASKGYPDSYPKGLKINGLLENKNTNDNIIFQAGTTVNGSNDIVTNGGRVLSCTSVSESLEDAIKNSYKLIETISFEGMQYRKDIGQKALNHLERKKQQQANSKQSVSYSESGVDIERGDAVVDNIGPLAKATTRLGCVSDLGGFGALFDTKAAGFRDPILVSGTDGVGTKLKIAQELGIHDSIGIDLVAMCVNDVVVQGAEPLFFLDYFATGRIHVDVATQVVSGIARGCKESGCALIGGETAEMPGMYKDGEYDLAGFSVGAVERDQMLPSNIQEGNILLGLASSGVHSNGYSLVRYLIETKSGGLTYNSIAPFDSSKTLGQVLLTPTKLYVLSCLAAIKSGGVNGLAHITGGGITENLPRVIPDGLDCEVELGSWEILPIFKYLVELGNMETEELLKTFNSGIGMILIVSPDKVDSITKSLESNNEKVYKIGKIINSKTSKQSKSKVIYK.

The interval 6-452 is GARS; the sequence is NILVIGSGSR…YRKDIGQKAL (447 aa). The ATP-grasp domain occupies 113–343; sequence KDFMARNNIP…LFEIVLACIE (231 aa). An ATP-binding site is contributed by 139–200; the sequence is IESLNYKIVL…EEFLDGEECS (62 aa). Residues glutamate 313 and asparagine 315 each coordinate Mg(2+). Residues 469 to 801 form an AIRS region; it reads VSYSESGVDI…KVYKIGKIIN (333 aa).

The protein in the N-terminal section; belongs to the GARS family. This sequence in the C-terminal section; belongs to the AIR synthase family. Mg(2+) is required as a cofactor. Mn(2+) serves as cofactor.

It is found in the cytoplasm. The protein resides in the cytosol. It catalyses the reaction 5-phospho-beta-D-ribosylamine + glycine + ATP = N(1)-(5-phospho-beta-D-ribosyl)glycinamide + ADP + phosphate + H(+). The enzyme catalyses 2-formamido-N(1)-(5-O-phospho-beta-D-ribosyl)acetamidine + ATP = 5-amino-1-(5-phospho-beta-D-ribosyl)imidazole + ADP + phosphate + H(+). The protein operates within purine metabolism; IMP biosynthesis via de novo pathway; 5-amino-1-(5-phospho-D-ribosyl)imidazole from N(2)-formyl-N(1)-(5-phospho-D-ribosyl)glycinamide: step 2/2. It participates in purine metabolism; IMP biosynthesis via de novo pathway; N(1)-(5-phospho-D-ribosyl)glycinamide from 5-phospho-alpha-D-ribose 1-diphosphate: step 2/2. Catalyzes the second and fifth step in the 'de novo' purine biosynthesis pathway; contains phosphoribosylamine--glycine ligase (GARS) and phosphoribosylformylglycinamidine cyclo-ligase (AIRS) activities. This is Bifunctional purine biosynthetic protein purD (purD) from Dictyostelium discoideum (Social amoeba).